Here is a 691-residue protein sequence, read N- to C-terminus: Pleckstrin homology domain-containing family G member 7 (691 aa).

Disordered regions lie at residues 1 to 48 (MEKT…ISTS) and 109 to 140 (TSEP…LQPV). Residues 313–488 (MIFMNTLRYL…EGKVKWLDNF (176 aa)) form the DH domain. Asparagine 395 is a glycosylation site (N-linked (GlcNAc...) asparagine). The PH domain maps to 535 to 668 (HLLYEGKLTL…WMAQITTAIS (134 aa)).

The sequence is that of Pleckstrin homology domain-containing family G member 7 from Homo sapiens (Human).